An 882-amino-acid polypeptide reads, in one-letter code: Translation initiation factor IF-2 (882 aa).

Residues 28–296 are disordered; that stretch reads GIRKSADDSV…LQQGFQKPAQ (269 aa). A compositionally biased stretch (polar residues) spans 67–81; that stretch reads STLNIPGTGGKSKSV. A compositionally biased stretch (basic and acidic residues) spans 92 to 209; sequence VKRDPQEAER…RMAEENKWTD (118 aa). Residues 244–258 show a composition bias toward basic residues; sequence GRGRNAKAARPKKGN. Positions 259–272 are enriched in basic and acidic residues; sequence KHAESKADREEARA. The region spanning 381–550 is the tr-type G domain; it reads PRAPVVTIMG…LLQAEVLELK (170 aa). Residues 390–397 form a G1 region; the sequence is GHVDHGKT. A GTP-binding site is contributed by 390-397; it reads GHVDHGKT. A G2 region spans residues 415–419; it reads GITQH. Residues 436 to 439 are G3; it reads DTPG. Residues 436-440 and 490-493 contribute to the GTP site; these read DTPGH and NKID. Positions 490–493 are G4; the sequence is NKID. The interval 526–528 is G5; sequence SAK. Residue lysine 800 is modified to N6-acetyllysine.

It belongs to the TRAFAC class translation factor GTPase superfamily. Classic translation factor GTPase family. IF-2 subfamily.

It localises to the cytoplasm. One of the essential components for the initiation of protein synthesis. Protects formylmethionyl-tRNA from spontaneous hydrolysis and promotes its binding to the 30S ribosomal subunits. Also involved in the hydrolysis of GTP during the formation of the 70S ribosomal complex. The chain is Translation initiation factor IF-2 from Shigella boydii serotype 4 (strain Sb227).